Reading from the N-terminus, the 303-residue chain is Probable 5-dehydro-4-deoxyglucarate dehydratase (303 aa).

It belongs to the DapA family.

It carries out the reaction 5-dehydro-4-deoxy-D-glucarate + H(+) = 2,5-dioxopentanoate + CO2 + H2O. Its pathway is carbohydrate acid metabolism; D-glucarate degradation; 2,5-dioxopentanoate from D-glucarate: step 2/2. This Acinetobacter baumannii (strain ATCC 17978 / DSM 105126 / CIP 53.77 / LMG 1025 / NCDC KC755 / 5377) protein is Probable 5-dehydro-4-deoxyglucarate dehydratase.